The primary structure comprises 109 residues: Small ribosomal subunit protein bS6c (109 aa).

It belongs to the bacterial ribosomal protein bS6 family.

The protein resides in the plastid. Its subcellular location is the chloroplast. In terms of biological role, binds together with bS18 to 16S ribosomal RNA. The polypeptide is Small ribosomal subunit protein bS6c (Pyropia yezoensis (Susabi-nori)).